A 430-amino-acid polypeptide reads, in one-letter code: Glutamate-1-semialdehyde 2,1-aminomutase (430 aa).

Residue Lys-265 is modified to N6-(pyridoxal phosphate)lysine.

The protein belongs to the class-III pyridoxal-phosphate-dependent aminotransferase family. HemL subfamily. In terms of assembly, homodimer. It depends on pyridoxal 5'-phosphate as a cofactor.

Its subcellular location is the cytoplasm. The enzyme catalyses (S)-4-amino-5-oxopentanoate = 5-aminolevulinate. It functions in the pathway porphyrin-containing compound metabolism; protoporphyrin-IX biosynthesis; 5-aminolevulinate from L-glutamyl-tRNA(Glu): step 2/2. The sequence is that of Glutamate-1-semialdehyde 2,1-aminomutase from Shewanella putrefaciens (strain CN-32 / ATCC BAA-453).